We begin with the raw amino-acid sequence, 744 residues long: NAD(P)H-quinone oxidoreductase subunit 5, chloroplastic (744 aa).

16 helical membrane passes run 9–29 (WIIP…LLFF), 40–60 (WVFP…DLSI), 89–109 (IDSL…LVLI), 125–145 (FTYL…SNLI), 147–167 (VYIF…FWFT), 185–205 (GDFG…SLEF), 219–239 (NEVN…GSVA), 258–278 (TPIS…FLVA), 280–300 (LLPL…IGII), 327–347 (LGYM…FHLI), 354–374 (ALLF…VGYS), 396–416 (NAFL…CFWS), 425–445 (WLYS…TAFY), 552–572 (LFSM…GISF), 612–632 (FSVS…KPVF), and 724–744 (ISSY…SIFI).

The protein belongs to the complex I subunit 5 family. As to quaternary structure, NDH is composed of at least 16 different subunits, 5 of which are encoded in the nucleus.

Its subcellular location is the plastid. The protein localises to the chloroplast thylakoid membrane. It catalyses the reaction a plastoquinone + NADH + (n+1) H(+)(in) = a plastoquinol + NAD(+) + n H(+)(out). The catalysed reaction is a plastoquinone + NADPH + (n+1) H(+)(in) = a plastoquinol + NADP(+) + n H(+)(out). In terms of biological role, NDH shuttles electrons from NAD(P)H:plastoquinone, via FMN and iron-sulfur (Fe-S) centers, to quinones in the photosynthetic chain and possibly in a chloroplast respiratory chain. The immediate electron acceptor for the enzyme in this species is believed to be plastoquinone. Couples the redox reaction to proton translocation, and thus conserves the redox energy in a proton gradient. This Cicer arietinum (Chickpea) protein is NAD(P)H-quinone oxidoreductase subunit 5, chloroplastic (ndhF).